Reading from the N-terminus, the 67-residue chain is DNA-directed RNA polymerase subunit omega (67 aa).

This sequence belongs to the RNA polymerase subunit omega family. As to quaternary structure, the RNAP catalytic core consists of 2 alpha, 1 beta, 1 beta' and 1 omega subunit. When a sigma factor is associated with the core the holoenzyme is formed, which can initiate transcription.

The enzyme catalyses RNA(n) + a ribonucleoside 5'-triphosphate = RNA(n+1) + diphosphate. Its function is as follows. Promotes RNA polymerase assembly. Latches the N- and C-terminal regions of the beta' subunit thereby facilitating its interaction with the beta and alpha subunits. This is DNA-directed RNA polymerase subunit omega from Cupriavidus metallidurans (strain ATCC 43123 / DSM 2839 / NBRC 102507 / CH34) (Ralstonia metallidurans).